Here is a 308-residue protein sequence, read N- to C-terminus: Limonin dehydrogenase (308 aa).

This sequence belongs to the aldehyde dehydrogenase family.

Its subcellular location is the periplasm. Its activity is regulated as follows. Completely inhibited by HgCl(2), CoCl(2) and CaCl(2). Its function is as follows. Catalyzes the NAD(+)-dependent conversion of limonin. This Pseudomonas putida (Arthrobacter siderocapsulatus) protein is Limonin dehydrogenase.